Here is a 39-residue protein sequence, read N- to C-terminus: Photosystem II reaction center protein Y (39 aa).

Residues 4–24 form a helical membrane-spanning segment; that stretch reads RVIVVVSPLLIAATWAAINIG.

This sequence belongs to the PsbY family. As to quaternary structure, PSII is composed of 1 copy each of membrane proteins PsbA, PsbB, PsbC, PsbD, PsbE, PsbF, PsbH, PsbI, PsbJ, PsbK, PsbL, PsbM, PsbT, PsbX, PsbY, PsbZ, Psb30/Ycf12, peripheral proteins PsbO, CyanoQ (PsbQ), PsbU, PsbV and a large number of cofactors. It forms dimeric complexes.

It localises to the cellular thylakoid membrane. In terms of biological role, loosely associated component of the core of photosystem II (PSII), it is not always seen in crystals. PSII is a light-driven water plastoquinone oxidoreductase, using light energy to abstract electrons from H(2)O, generating a proton gradient subsequently used for ATP formation. The protein is Photosystem II reaction center protein Y of Synechocystis sp. (strain ATCC 27184 / PCC 6803 / Kazusa).